Here is a 639-residue protein sequence, read N- to C-terminus: Polyvinylalcohol dehydrogenase (639 aa).

Residues 1 to 33 (MQQNIERNQVSMTTSRFVWGAVMALVALGSASA) form the signal peptide. Positions 36–152 (LNLPDGAALY…TPDQWNGWGA (117 aa)) constitute a Cytochrome c domain. Positions 49, 52, and 53 each coordinate heme.

The protein belongs to the bacterial PQQ dehydrogenase family. As to quaternary structure, monomer. Pyrroloquinoline quinone is required as a cofactor.

Its subcellular location is the cytoplasm. The catalysed reaction is a polyvinyl alcohol + 2n Fe(III)-[cytochrome c] = an oxidized polyvinyl alcohol + 2n Fe(II)-[cytochrome c] + 2n H(+). Its function is as follows. Catalyzes the oxidation of polyvinyl alcohol (PVA) in the polyvinyl alcohol degradation pathway. This Pseudomonas sp protein is Polyvinylalcohol dehydrogenase (pvaA).